The chain runs to 154 residues: Large-conductance mechanosensitive channel (154 aa).

The next 3 helical transmembrane spans lie at valine 16–valine 36, aspartate 39–isoleucine 59, and glycine 89–methionine 109.

Belongs to the MscL family. As to quaternary structure, homopentamer.

The protein localises to the cell inner membrane. Channel that opens in response to stretch forces in the membrane lipid bilayer. May participate in the regulation of osmotic pressure changes within the cell. The sequence is that of Large-conductance mechanosensitive channel from Zymomonas mobilis subsp. mobilis (strain ATCC 31821 / ZM4 / CP4).